The following is a 217-amino-acid chain: Glycosylphosphatidylinositol anchor biosynthesis protein 11 (217 aa).

6 helical membrane passes run 45–61 (TWQTIPFHLIVLSYWFI), 74–94 (WLLVPCQVLYLALQFNPATVY), 111–131 (VTCILLTIPCMLLVVLFGAPF), 138–158 (TWLLSLHCCVLSYPAVYSVLN), 169–189 (YFISIAVGCWISCLAIPLDWD), and 195–215 (WPIPLVVGAQLGAMFGYTFCS).

The protein belongs to the PIGF family.

Its subcellular location is the endoplasmic reticulum membrane. Its pathway is glycolipid biosynthesis; glycosylphosphatidylinositol-anchor biosynthesis. Functionally, acts in the GPI biosynthetic pathway between GlcNAc-PI synthesis and GPI transfer to protein. This chain is Glycosylphosphatidylinositol anchor biosynthesis protein 11 (GPI11), found in Eremothecium gossypii (strain ATCC 10895 / CBS 109.51 / FGSC 9923 / NRRL Y-1056) (Yeast).